Reading from the N-terminus, the 405-residue chain is Adenylosuccinate synthetase (405 aa).

GTP is bound by residues 12–18 (GDEGKGK) and 40–42 (GHT). The Proton acceptor role is filled by Asp-13. Mg(2+) is bound by residues Asp-13 and Gly-40. IMP contacts are provided by residues 13–16 (DEGK), 38–41 (NAGH), Thr-121, Arg-135, Gln-213, Thr-228, and Arg-297. Residue His-41 is the Proton donor of the active site. 293–299 (TTTGRPR) is a substrate binding site. GTP-binding positions include Arg-299, 325–327 (KMD), and 390–392 (SAG).

Belongs to the adenylosuccinate synthetase family. As to quaternary structure, homodimer. Mg(2+) serves as cofactor.

Its subcellular location is the cytoplasm. The enzyme catalyses IMP + L-aspartate + GTP = N(6)-(1,2-dicarboxyethyl)-AMP + GDP + phosphate + 2 H(+). It functions in the pathway purine metabolism; AMP biosynthesis via de novo pathway; AMP from IMP: step 1/2. Its function is as follows. Plays an important role in the de novo pathway of purine nucleotide biosynthesis. Catalyzes the first committed step in the biosynthesis of AMP from IMP. The chain is Adenylosuccinate synthetase from Deinococcus radiodurans (strain ATCC 13939 / DSM 20539 / JCM 16871 / CCUG 27074 / LMG 4051 / NBRC 15346 / NCIMB 9279 / VKM B-1422 / R1).